Reading from the N-terminus, the 324-residue chain is DNA primase small subunit PriS (324 aa).

Residues aspartate 94, aspartate 96, and aspartate 274 contribute to the active site.

The protein belongs to the eukaryotic-type primase small subunit family. As to quaternary structure, heterodimer of a small subunit (PriS) and a large subunit (PriL). Requires Mg(2+) as cofactor. Mn(2+) is required as a cofactor.

Its function is as follows. Catalytic subunit of DNA primase, an RNA polymerase that catalyzes the synthesis of short RNA molecules used as primers for DNA polymerase during DNA replication. The small subunit contains the primase catalytic core and has DNA synthesis activity on its own. Binding to the large subunit stabilizes and modulates the activity, increasing the rate of DNA synthesis while decreasing the length of the DNA fragments, and conferring RNA synthesis capability. The DNA polymerase activity may enable DNA primase to also catalyze primer extension after primer synthesis. May also play a role in DNA repair. The polypeptide is DNA primase small subunit PriS (Methanobrevibacter smithii (strain ATCC 35061 / DSM 861 / OCM 144 / PS)).